Here is a 253-residue protein sequence, read N- to C-terminus: UPF0246 protein LBA1843 (253 aa).

Belongs to the UPF0246 family.

This chain is UPF0246 protein LBA1843, found in Lactobacillus acidophilus (strain ATCC 700396 / NCK56 / N2 / NCFM).